Reading from the N-terminus, the 118-residue chain is MQFSIIAISFLASLAMASPAKRGGGGGGSGSGSGSGSGSGSGGGSTTYTACSSTLYSEAQCCATDVLGVADLDCETVPETPTSASSFESICATSGRDAKCCTIPLLGQALLCQDPVGL.

Positions 1 to 22 (MQFSIIAISFLASLAMASPAKR) are cleaved as a signal peptide. The segment at 20–46 (AKRGGGGGGSGSGSGSGSGSGSGGGST) is disordered. Gly residues predominate over residues 22–45 (RGGGGGGSGSGSGSGSGSGSGGGS). A run of 7 repeats spans residues 29–30 (SG), 31–32 (SG), 33–34 (SG), 35–36 (SG), 37–38 (SG), 39–40 (SG), and 41–42 (SG). Residues 29–42 (SGSGSGSGSGSGSG) are 7 X 2 AA tandem repeats of S-G. 4 disulfides stabilise this stretch: C51–C100, C61–C91, C62–C74, and C101–C112.

The protein belongs to the cerato-ulmin hydrophobin family. As to quaternary structure, homotetramer. Further self-assembles to form highly ordered films at water-air interfaces through intermolecular interactions.

Its subcellular location is the secreted. It is found in the cell wall. Aerial growth, conidiation, and dispersal of filamentous fungi in the environment rely upon a capability of their secreting small amphipathic proteins called hydrophobins (HPBs) with low sequence identity. Class I can self-assemble into an outermost layer of rodlet bundles on aerial cell surfaces, conferring cellular hydrophobicity that supports fungal growth, development and dispersal; whereas Class II form highly ordered films at water-air interfaces through intermolecular interactions but contribute nothing to the rodlet structure. Cryparin is a class II hydrophobin that is the most abundant protein produced by this fungus when grown in liquid culture and that plays an essential role in the fitness of this important plant pathogen by facilitating the eruption of the fungal fruiting bodies through the bark of its host tree. This chain is Class II hydrophobin CRP, found in Cryphonectria parasitica (Chestnut blight fungus).